Reading from the N-terminus, the 302-residue chain is Deoxyhypusine hydroxylase (302 aa).

Methionine 1 is modified (N-acetylmethionine). 5 HEAT-like PBS-type repeats span residues 54 to 80 (LKHELAYCLGQMRDPRAIPVLVSVLQD), 87 to 113 (VRHEAGEALGAIGNPKVLGLLKQYSTD), 175 to 201 (ERYRAMFALRNVGGKEAALALAEGLKC), 206 to 232 (FRHEVGYVLGQLQHEAAVSELAATLAR), and 239 to 265 (VRHECAEALGAIARPACLAALREYITD). Fe cation is bound by residues histidine 56, histidine 89, and glutamate 90. Fe cation contacts are provided by histidine 208, histidine 241, and glutamate 242.

It belongs to the deoxyhypusine hydroxylase family. Fe(2+) serves as cofactor.

The enzyme catalyses [eIF5A protein]-deoxyhypusine + AH2 + O2 = [eIF5A protein]-hypusine + A + H2O. The protein operates within protein modification; eIF5A hypusination. Functionally, catalyzes the hydroxylation of the N(6)-(4-aminobutyl)-L-lysine intermediate produced by deoxyhypusine synthase/DHPS on a critical lysine of the eukaryotic translation initiation factor 5A/eIF-5A. This is the second step of the post-translational modification of that lysine into an unusual amino acid residue named hypusine. Hypusination is unique to mature eIF-5A factor and is essential for its function. The chain is Deoxyhypusine hydroxylase (Dohh) from Rattus norvegicus (Rat).